A 316-amino-acid chain; its full sequence is Homoserine kinase (316 aa).

97 to 107 (PHSRGLGSSAA) lines the ATP pocket.

Belongs to the GHMP kinase family. Homoserine kinase subfamily.

It is found in the cytoplasm. It catalyses the reaction L-homoserine + ATP = O-phospho-L-homoserine + ADP + H(+). Its pathway is amino-acid biosynthesis; L-threonine biosynthesis; L-threonine from L-aspartate: step 4/5. Its function is as follows. Catalyzes the ATP-dependent phosphorylation of L-homoserine to L-homoserine phosphate. In Mycobacterium tuberculosis (strain ATCC 25618 / H37Rv), this protein is Homoserine kinase.